An 81-amino-acid polypeptide reads, in one-letter code: Photosystem I iron-sulfur center (81 aa).

4Fe-4S ferredoxin-type domains are found at residues 2-31 and 39-68; these read AHSV…MISW and IASA…VRVY. Cysteine 11, cysteine 14, cysteine 17, cysteine 21, cysteine 48, cysteine 51, cysteine 54, and cysteine 58 together coordinate [4Fe-4S] cluster.

In terms of assembly, the eukaryotic PSI reaction center is composed of at least 11 subunits. Requires [4Fe-4S] cluster as cofactor.

The protein resides in the plastid. The protein localises to the chloroplast thylakoid membrane. It carries out the reaction reduced [plastocyanin] + hnu + oxidized [2Fe-2S]-[ferredoxin] = oxidized [plastocyanin] + reduced [2Fe-2S]-[ferredoxin]. Functionally, apoprotein for the two 4Fe-4S centers FA and FB of photosystem I (PSI); essential for photochemical activity. FB is the terminal electron acceptor of PSI, donating electrons to ferredoxin. The C-terminus interacts with PsaA/B/D and helps assemble the protein into the PSI complex. Required for binding of PsaD and PsaE to PSI. PSI is a plastocyanin-ferredoxin oxidoreductase, converting photonic excitation into a charge separation, which transfers an electron from the donor P700 chlorophyll pair to the spectroscopically characterized acceptors A0, A1, FX, FA and FB in turn. The chain is Photosystem I iron-sulfur center (psaC) from Anthoceros angustus (Hornwort).